The following is a 718-amino-acid chain: Probable glycerol-3-phosphate acyltransferase, mitochondrial (718 aa).

The HXXXXD motif signature appears at 167–172 (HRSHLD). A helical transmembrane segment spans residues 409–425 (MMCSISPVAVVSCLLLA).

It belongs to the GPAT/DAPAT family.

It localises to the mitochondrion membrane. It carries out the reaction sn-glycerol 3-phosphate + an acyl-CoA = a 1-acyl-sn-glycero-3-phosphate + CoA. It participates in phospholipid metabolism; CDP-diacylglycerol biosynthesis; CDP-diacylglycerol from sn-glycerol 3-phosphate: step 1/3. This is Probable glycerol-3-phosphate acyltransferase, mitochondrial (acl-6) from Caenorhabditis elegans.